A 474-amino-acid polypeptide reads, in one-letter code: tRNA-2-methylthio-N(6)-dimethylallyladenosine synthase (474 aa).

Residues 21–138 enclose the MTTase N-terminal domain; the sequence is ERVYVETQGC…LPQMLARRRS (118 aa). Residues Cys30, Cys67, Cys101, Cys175, Cys179, and Cys182 each coordinate [4Fe-4S] cluster. The 235-residue stretch at 161 to 395 folds into the Radical SAM core domain; the sequence is RAEGPTAYVS…ARLHEQQSAA (235 aa). Residues 397 to 460 enclose the TRAM domain; sequence RALLGTRQSV…THSLRGRVVS (64 aa).

This sequence belongs to the methylthiotransferase family. MiaB subfamily. Monomer. It depends on [4Fe-4S] cluster as a cofactor.

The protein localises to the cytoplasm. The enzyme catalyses N(6)-dimethylallyladenosine(37) in tRNA + (sulfur carrier)-SH + AH2 + 2 S-adenosyl-L-methionine = 2-methylsulfanyl-N(6)-dimethylallyladenosine(37) in tRNA + (sulfur carrier)-H + 5'-deoxyadenosine + L-methionine + A + S-adenosyl-L-homocysteine + 2 H(+). Functionally, catalyzes the methylthiolation of N6-(dimethylallyl)adenosine (i(6)A), leading to the formation of 2-methylthio-N6-(dimethylallyl)adenosine (ms(2)i(6)A) at position 37 in tRNAs that read codons beginning with uridine. The protein is tRNA-2-methylthio-N(6)-dimethylallyladenosine synthase of Halorhodospira halophila (strain DSM 244 / SL1) (Ectothiorhodospira halophila (strain DSM 244 / SL1)).